A 328-amino-acid polypeptide reads, in one-letter code: Malate dehydrogenase (328 aa).

Residue 11–17 coordinates NAD(+); the sequence is GAAGQIG. Arg94 and Arg100 together coordinate substrate. Residues Asn107, Gln114, and 131-133 contribute to the NAD(+) site; that span reads VGN. 2 residues coordinate substrate: Asn133 and Arg164. The active-site Proton acceptor is the His189.

Belongs to the LDH/MDH superfamily. MDH type 2 family.

It carries out the reaction (S)-malate + NAD(+) = oxaloacetate + NADH + H(+). Its function is as follows. Catalyzes the reversible oxidation of malate to oxaloacetate. The chain is Malate dehydrogenase from Xylella fastidiosa (strain M23).